The sequence spans 137 residues: Ribonuclease kappa (137 aa).

2 consecutive transmembrane segments (helical) span residues 52–72 (ACGI…GIFF) and 104–124 (VSYN…FSFC).

This sequence belongs to the RNase K family. Interacts with the proton translocation complex V0 of the V-ATPase. Interacts with ATP6AP1. As to expression, widely expressed.

It localises to the endomembrane system. It is found in the cytoplasmic vesicle. The protein resides in the clathrin-coated vesicle membrane. Functionally, endoribonuclease which preferentially cleaves ApU and ApG phosphodiester bonds. Hydrolyzes UpU bonds at a lower rate. Regulates the activity of vacuolar (H+)-ATPase (V-ATPase) which is responsible for acidifying and maintaining the pH of intracellular compartments. Required at an early stage of receptor-mediated endocytosis. In terms of biological role, (Microbial infection) Required at an early stage of both clathrin-mediated and clathrin-independent endocytic uptake of a diverse set of viruses, including dengue, West Nile, Sindbis, Rift Valley Fever, influenza, and human rhinoviruses. The polypeptide is Ribonuclease kappa (RNASEK) (Homo sapiens (Human)).